A 60-amino-acid chain; its full sequence is Short neurotoxin 1 (60 aa).

Cystine bridges form between Cys-3/Cys-22, Cys-17/Cys-39, Cys-41/Cys-52, and Cys-53/Cys-58.

Belongs to the three-finger toxin family. Short-chain subfamily. Type I alpha-neurotoxin sub-subfamily. Expressed by the venom gland.

It localises to the secreted. Its function is as follows. Binds to muscle nicotinic acetylcholine receptor (nAChR) and inhibit acetylcholine from binding to the receptor, thereby impairing neuromuscular transmission. The polypeptide is Short neurotoxin 1 (Dendroaspis polylepis polylepis (Black mamba)).